The chain runs to 597 residues: Inactive metallocarboxypeptidase ECM14 (597 aa).

The N-terminal stretch at 1–21 is a signal peptide; sequence MRLFTHGQVLALLAFVNTISA. A propeptide spanning residues 22–174 is cleaved from the precursor; sequence TPSFSTNSYP…QTIYESYPSP (153 aa). Low complexity predominate over residues 170–179; sequence SYPSPSQSPS. Residues 170–189 are disordered; it reads SYPSPSQSPSGRERGFLPSG. The region spanning 202–522 is the Peptidase M14 domain; that stretch reads NYQPLSVIVP…NAVMMLGRFL (321 aa). Histidine 264 and glutamate 267 together coordinate Zn(2+). Substrate is bound by residues 264–267, arginine 322, and 339–340; these read HARE and DR. Cysteine 333 and cysteine 356 are oxidised to a cystine. N-linked (GlcNAc...) asparagine glycosylation is present at asparagine 349. Histidine 396 contacts Zn(2+). 397–398 is a substrate binding site; sequence SY. Positions 543–597 are disordered; the sequence is KDDKPILNDDDDDDADTNDDGIGRKDDSWIPDEYKGDNDRDESDGGWAFRRLRKR. Acidic residues predominate over residues 550-561; sequence NDDDDDDADTND. The segment covering 563 to 580 has biased composition (basic and acidic residues); the sequence is GIGRKDDSWIPDEYKGDN.

This sequence belongs to the peptidase M14 family. Zn(2+) is required as a cofactor.

The protein localises to the vacuole. It is found in the secreted. Inactive carboxypeptidase that may play a role in cell wall organization and biogenesis. The chain is Inactive metallocarboxypeptidase ECM14 (ECM14) from Ajellomyces capsulatus (strain G186AR / H82 / ATCC MYA-2454 / RMSCC 2432) (Darling's disease fungus).